We begin with the raw amino-acid sequence, 537 residues long: Di/tripeptide-binding protein 1 (537 aa).

A signal peptide spans 1–29 (MRRNAVIRSAIMPSLLGAALVAAVPQAFA).

It belongs to the bacterial solute-binding protein 5 family. The complex is composed of two ATP-binding proteins (DppD and DppF), two transmembrane proteins (DppB and DppC) and a solute-binding protein (DppA1). Five orthologous SBPs (DppA1-A5) are present in P.aeruginosa, which increases the substrate specificity of the DppBCDF transporter.

In terms of biological role, part of the ABC transporter DppABCDF involved in the uptake of various di/tripeptides. Prefers dipeptides with acidic residues at the C-terminal end. Involved in the uptake of phaseolotoxin, a toxic tripeptide inhibiting the enzyme ornithine carbamoyltransferase. The sequence is that of Di/tripeptide-binding protein 1 from Pseudomonas aeruginosa (strain UCBPP-PA14).